A 215-amino-acid chain; its full sequence is Peroxiredoxin (215 aa).

In terms of domain architecture, Thioredoxin spans 3–158; it reads PLLGDNFPEI…ILRAVKALQV (156 aa). Cys45 serves as the catalytic Cysteine sulfenic acid (-SOH) intermediate. Residue Arg121 participates in substrate binding. The cysteines at positions 205 and 211 are disulfide-linked.

The protein belongs to the peroxiredoxin family. Prx6 subfamily. Homodecamer. Pentamer of dimers that assemble into a ring structure.

It localises to the cytoplasm. It carries out the reaction a hydroperoxide + [thioredoxin]-dithiol = an alcohol + [thioredoxin]-disulfide + H2O. Thiol-specific peroxidase that catalyzes the reduction of hydrogen peroxide and organic hydroperoxides to water and alcohols, respectively. Plays a role in cell protection against oxidative stress by detoxifying peroxides. This Archaeoglobus fulgidus (strain ATCC 49558 / DSM 4304 / JCM 9628 / NBRC 100126 / VC-16) protein is Peroxiredoxin.